The following is a 172-amino-acid chain: Trypsin inhibitor DE-3 (172 aa).

Cystine bridges form between Cys-39/Cys-83 and Cys-132/Cys-139.

The protein belongs to the protease inhibitor I3 (leguminous Kunitz-type inhibitor) family.

Its function is as follows. Inhibition of trypsin. This chain is Trypsin inhibitor DE-3, found in Erythrina latissima (Broad-leaved coral tree).